Reading from the N-terminus, the 271-residue chain is Thiamine thiazole synthase (271 aa).

NAD(+) contacts are provided by residues serine 39, 58-59 (ER), glycine 66, valine 130, and 158-160 (HVD). Fe cation contacts are provided by aspartate 160 and histidine 175. Residue methionine 225 participates in NAD(+) binding. Glycine is bound at residue arginine 235.

This sequence belongs to the THI4 family. In terms of assembly, homooctamer; tetramer of dimers. Fe(2+) is required as a cofactor.

It carries out the reaction hydrogen sulfide + glycine + NAD(+) = ADP-5-ethyl-4-methylthiazole-2-carboxylate + nicotinamide + 3 H2O + H(+). Its pathway is cofactor biosynthesis; thiamine diphosphate biosynthesis. Involved in the biosynthesis of the thiazole moiety of thiamine. Catalyzes the conversion of NAD and glycine to adenosine diphosphate 5-(2-hydroxyethyl)-4-methylthiazole-2-carboxylate (ADT), an adenylated thiazole intermediate, using free sulfide as a source of sulfur. In Metallosphaera sedula (strain ATCC 51363 / DSM 5348 / JCM 9185 / NBRC 15509 / TH2), this protein is Thiamine thiazole synthase.